The chain runs to 475 residues: Retrotransposon Gag-like protein 3 (475 aa).

Composition is skewed to basic and acidic residues over residues 51–66 (LLRK…KLPE) and 78–87 (KTPEFKEPQK). 3 disordered regions span residues 51–101 (LLRK…EPPA), 152–173 (EPKN…APEY), and 397–421 (DPNP…ENQP). Residues 443–462 (RLCLYCGYPGHFARDCPVKP) form a CCHC-type zinc finger.

Its subcellular location is the nucleus. In terms of biological role, may function as a transcriptional regulator. Plays a role in postnatal myogenesis, may be involved in the regulation of satellite cells self-renewal. The protein is Retrotransposon Gag-like protein 3 of Homo sapiens (Human).